The primary structure comprises 427 residues: Serine hydroxymethyltransferase (427 aa).

Residues leucine 122 and 126–128 contribute to the (6S)-5,6,7,8-tetrahydrofolate site; that span reads GHL. N6-(pyridoxal phosphate)lysine is present on lysine 231. 355 to 357 contacts (6S)-5,6,7,8-tetrahydrofolate; that stretch reads SPF.

The protein belongs to the SHMT family. Homodimer. Pyridoxal 5'-phosphate is required as a cofactor.

Its subcellular location is the cytoplasm. The enzyme catalyses (6R)-5,10-methylene-5,6,7,8-tetrahydrofolate + glycine + H2O = (6S)-5,6,7,8-tetrahydrofolate + L-serine. Its pathway is one-carbon metabolism; tetrahydrofolate interconversion. The protein operates within amino-acid biosynthesis; glycine biosynthesis; glycine from L-serine: step 1/1. Its function is as follows. Catalyzes the reversible interconversion of serine and glycine with tetrahydrofolate (THF) serving as the one-carbon carrier. This reaction serves as the major source of one-carbon groups required for the biosynthesis of purines, thymidylate, methionine, and other important biomolecules. Also exhibits THF-independent aldolase activity toward beta-hydroxyamino acids, producing glycine and aldehydes, via a retro-aldol mechanism. This Nostoc sp. (strain PCC 7120 / SAG 25.82 / UTEX 2576) protein is Serine hydroxymethyltransferase.